Reading from the N-terminus, the 520-residue chain is Acetyltransferase MAT1 (520 aa).

Residues His-183 and Asp-456 each act as proton acceptor in the active site.

This sequence belongs to the plant acyltransferase family.

It functions in the pathway secondary metabolite biosynthesis. Acyl-CoA-dependent acyltransferase; part of the gene cluster that mediates the biosynthesis of mannosylerythritol lipids (MELs), surface-active substances that enhance the availability of water-insoluble substrates. Depending on the number of acetyl groups, mannosylerythritol lipids can be differentiated into MEL A (fully acetylated), MEL B and MEL C (monoacetylated at R-6 and R-4, respectively), and the fully deacetylated MEL D. The first step in the pathway is the generation of mannosylerythritol by the glycosyltransferase EMT1 which catalyzes the transfer of GDP-mannose to the C-4 atom of meso-erythritol. This reaction has to be stereospecific, since only mannosyl-D-erythritol is generated. The produced disaccharide is subsequently acylated with fatty acids of various lengths by the acyltransferases MAC1 and MAC2 at positions C-2 and C-3, repectively. The existence of MEL derivatives which carry an acetyl group at C-2 implies that at least MAC1 also accepts acetyl-CoA as a donor. The final step of MEL biosynthesis is the acetylation of the fully acylated mannosylerythritol lipids catalyzed by the acetyl-CoA-dependent acetyltransferase MAT1. MAT1 displays a relaxed regioselectivity and is able to transfer acetylgroups to both positions C-4 and C-6 of the mannosyl moiety. The protein is Acetyltransferase MAT1 of Pseudozyma antarctica (strain T-34) (Yeast).